A 364-amino-acid chain; its full sequence is Putative zinc metalloprotease all3971 (364 aa).

H17 contacts Zn(2+). E18 is an active-site residue. Zn(2+) is bound at residue H21. A run of 3 helical transmembrane segments spans residues 92–114, 281–303, and 329–346; these read AIVI…LAQV, LFFF…LPAL, and VMQT…FLIV. The PDZ domain maps to 103-188; it reads LIFAYMLLLA…KSIQLTVARG (86 aa).

Belongs to the peptidase M50B family. Zn(2+) is required as a cofactor.

It localises to the cell inner membrane. The chain is Putative zinc metalloprotease all3971 from Nostoc sp. (strain PCC 7120 / SAG 25.82 / UTEX 2576).